Here is a 251-residue protein sequence, read N- to C-terminus: POU class 2 homeobox associating factor 3 (251 aa).

The OCA domain maps to 5–27 (PKVYQGVRVKITVKELLQQRRAH). The disordered stretch occupies residues 24–45 (RRAHQAASGGTRSGGSSVHLSD). The segment covering 31–40 (SGGTRSGGSS) has biased composition (low complexity).

The protein belongs to the POU2AF family. As to quaternary structure, interacts with POU2F3 in a DNA-dependent manner; this interaction increases POU2F3 transactivation activity. In terms of tissue distribution, expressed in many cell types of epithelial, mesenchymal and hematopoietic origins. Expressed in tufs cells.

The protein localises to the cytoplasm. It localises to the nucleus. Its function is as follows. Transcriptional coactivator that specifically associates with POU2F3. This complex drives the development of tuft cells, a rare a rare chemosensory cells that coordinate immune and neural functions within mucosal epithelial tissues. The sequence is that of POU class 2 homeobox associating factor 3 from Homo sapiens (Human).